The sequence spans 315 residues: Ribosomal RNA small subunit methyltransferase H (315 aa).

S-adenosyl-L-methionine contacts are provided by residues 33-35 (GGH), D52, F84, D106, and Q113. A disordered region spans residues 295–315 (SDELEENNRSHSAKLRVAEKL).

It belongs to the methyltransferase superfamily. RsmH family.

The protein resides in the cytoplasm. It carries out the reaction cytidine(1402) in 16S rRNA + S-adenosyl-L-methionine = N(4)-methylcytidine(1402) in 16S rRNA + S-adenosyl-L-homocysteine + H(+). Its function is as follows. Specifically methylates the N4 position of cytidine in position 1402 (C1402) of 16S rRNA. The sequence is that of Ribosomal RNA small subunit methyltransferase H from Lactobacillus gasseri (strain ATCC 33323 / DSM 20243 / BCRC 14619 / CIP 102991 / JCM 1131 / KCTC 3163 / NCIMB 11718 / NCTC 13722 / AM63).